Consider the following 327-residue polypeptide: Flotillin-like protein FloA (327 aa).

Helical transmembrane passes span 6–26 (VLFF…FTFV) and 28–48 (IMLW…TLVG).

The protein belongs to the flotillin-like FloA family. In terms of assembly, homooligomerizes.

Its subcellular location is the cell membrane. The protein localises to the membrane raft. Its function is as follows. Found in functional membrane microdomains (FMM) that may be equivalent to eukaryotic membrane rafts. FMMs are highly dynamic and increase in number as cells age. Flotillins are thought to be important factors in membrane fluidity. This Priestia megaterium (strain DSM 319 / IMG 1521) (Bacillus megaterium) protein is Flotillin-like protein FloA.